We begin with the raw amino-acid sequence, 699 residues long: tRNA 5-methylaminomethyl-2-thiouridine biosynthesis bifunctional protein MnmC (699 aa).

Residues 1 to 260 (MTAKPQKSCQ…ERKLLRQQAD (260 aa)) form a tRNA (mnm(5)s(2)U34)-methyltransferase region. Positions 282-699 (VGGGLASANL…LRKLLKGKAL (418 aa)) are FAD-dependent cmnm(5)s(2)U34 oxidoreductase.

It in the N-terminal section; belongs to the methyltransferase superfamily. tRNA (mnm(5)s(2)U34)-methyltransferase family. In the C-terminal section; belongs to the DAO family. Requires FAD as cofactor.

It is found in the cytoplasm. The enzyme catalyses 5-aminomethyl-2-thiouridine(34) in tRNA + S-adenosyl-L-methionine = 5-methylaminomethyl-2-thiouridine(34) in tRNA + S-adenosyl-L-homocysteine + H(+). Its function is as follows. Catalyzes the last two steps in the biosynthesis of 5-methylaminomethyl-2-thiouridine (mnm(5)s(2)U) at the wobble position (U34) in tRNA. Catalyzes the FAD-dependent demodification of cmnm(5)s(2)U34 to nm(5)s(2)U34, followed by the transfer of a methyl group from S-adenosyl-L-methionine to nm(5)s(2)U34, to form mnm(5)s(2)U34. The polypeptide is tRNA 5-methylaminomethyl-2-thiouridine biosynthesis bifunctional protein MnmC (Shewanella sp. (strain MR-4)).